Reading from the N-terminus, the 253-residue chain is MALSMPLNGLKEEDKEPLIELFVKAGSDGESIGNCPFSQRLFMILWLKGVVFSVTTVDLKRKPADLQNLAPGTHPPFITFNSEVKTDVNKIEEFLEEVLCPPKYLKLSPKHPESNTAGMDIFAKFSAYIKNSRPEANEALERGLLKTLQKLDEYLNSPLPDEIDENSMEDIKFSTRRFLDGDEMTLADCNLLPKLHIVKVVAKKYRNFDIPKGMTGIWRYLTNAYSRDEFTNTCPSDKEVEIAYSDVAKRLTK.

Residue alanine 2 is modified to N-acetylalanine. The segment at alanine 2–proline 101 is required for insertion into the membrane. The residue at position 4 (serine 4) is a Phosphoserine. Position 24 is an N6-acetyllysine (lysine 24). The short motif at cysteine 35–serine 38 is the G-site element. A helical membrane pass occupies residues phenylalanine 37 to valine 57. In terms of domain architecture, GST C-terminal spans asparagine 81–tyrosine 244. Lysine 130 carries the N6-acetyllysine modification. Phosphoserine occurs at positions 132, 167, and 236. Residue tyrosine 244 is modified to Phosphotyrosine.

This sequence belongs to the chloride channel CLIC family. Monomer. Interacts with HRH30. Interacts with AKAP9. Detected in blood vessels in the retina (at protein level). Expressed to the greatest extent in vivo in heart, lung, liver, kidney, and skin.

It is found in the cytoplasm. It localises to the cytoskeleton. Its subcellular location is the microtubule organizing center. The protein localises to the centrosome. The protein resides in the cytoplasmic vesicle membrane. It is found in the nucleus. It localises to the cell membrane. Its subcellular location is the mitochondrion. The protein localises to the cell junction. It carries out the reaction chloride(in) = chloride(out). The enzyme catalyses thiocyanate(in) = thiocyanate(out). The catalysed reaction is nitrate(in) = nitrate(out). It catalyses the reaction iodide(out) = iodide(in). It carries out the reaction bromide(in) = bromide(out). The enzyme catalyses fluoride(in) = fluoride(out). The catalysed reaction is choline(out) = choline(in). Its function is as follows. In the soluble state, catalyzes glutaredoxin-like thiol disulfide exchange reactions with reduced glutathione as electron donor. Can insert into membranes and form voltage-dependent multi-ion conductive channels. Membrane insertion seems to be redox-regulated and may occur only under oxidizing conditions. Has alternate cellular functions like a potential role in angiogenesis or in maintaining apical-basolateral membrane polarity during mitosis and cytokinesis. Could also promote endothelial cell proliferation and regulate endothelial morphogenesis (tubulogenesis). Promotes cell-surface expression of HRH3. The protein is Chloride intracellular channel protein 4 (Clic4) of Mus musculus (Mouse).